Consider the following 75-residue polypeptide: uncharacterized protein (75 aa).

An N-terminal signal peptide occupies residues 1–21 (MRLIVVSIMVTLLSGCGSIIS).

To E.coli YidQ.

This is an uncharacterized protein from Escherichia coli O157:H7.